Here is a 190-residue protein sequence, read N- to C-terminus: RING finger protein 227 (190 aa).

An RING-type zinc finger spans residues C18–R81. The disordered stretch occupies residues K111–S145. Residues D126–E136 are compositionally biased toward acidic residues.

The chain is RING finger protein 227 from Homo sapiens (Human).